Here is a 122-residue protein sequence, read N- to C-terminus: Large ribosomal subunit protein uL14 (122 aa).

The protein belongs to the universal ribosomal protein uL14 family. As to quaternary structure, part of the 50S ribosomal subunit. Forms a cluster with proteins L3 and L19. In the 70S ribosome, L14 and L19 interact and together make contacts with the 16S rRNA in bridges B5 and B8.

In terms of biological role, binds to 23S rRNA. Forms part of two intersubunit bridges in the 70S ribosome. In Mycolicibacterium smegmatis (strain ATCC 700084 / mc(2)155) (Mycobacterium smegmatis), this protein is Large ribosomal subunit protein uL14.